The following is a 1515-amino-acid chain: Glutamate synthase [NADPH] large chain (1515 aa).

Residues 1–36 (MTTELNQGEQFVADFRANAAALTTANAYNPEDEHDA) constitute a propeptide that is removed on maturation. Cys-37 acts as the For GATase activity in catalysis. In terms of domain architecture, Glutamine amidotransferase type-2 spans 37–432 (CGVGFIAAID…PGEMIAVDLQ (396 aa)). The disordered stretch occupies residues 916-937 (AKSDSGEGGEDPARFRPDKNGD). Basic and acidic residues predominate over residues 926-936 (DPARFRPDKNG). FMN-binding positions include 1085–1142 (LSEV…IMVR) and 1086–1142 (SEVH…IMVR). Residues Cys-1138, Cys-1144, and Cys-1149 each coordinate [3Fe-4S] cluster.

The protein belongs to the glutamate synthase family. In terms of assembly, aggregate of 4 catalytic active heterodimers, consisting of a large and a small subunit. [3Fe-4S] cluster serves as cofactor. The cofactor is FAD. It depends on FMN as a cofactor.

It catalyses the reaction 2 L-glutamate + NADP(+) = L-glutamine + 2-oxoglutarate + NADPH + H(+). Its pathway is amino-acid biosynthesis; L-glutamate biosynthesis via GLT pathway; L-glutamate from 2-oxoglutarate and L-glutamine (NADP(+) route): step 1/1. It functions in the pathway energy metabolism; nitrogen metabolism. This is Glutamate synthase [NADPH] large chain (gltB) from Azospirillum brasilense.